A 100-amino-acid polypeptide reads, in one-letter code: Aspartyl/glutamyl-tRNA(Asn/Gln) amidotransferase subunit C (100 aa).

Belongs to the GatC family. Heterotrimer of A, B and C subunits.

It carries out the reaction L-glutamyl-tRNA(Gln) + L-glutamine + ATP + H2O = L-glutaminyl-tRNA(Gln) + L-glutamate + ADP + phosphate + H(+). The catalysed reaction is L-aspartyl-tRNA(Asn) + L-glutamine + ATP + H2O = L-asparaginyl-tRNA(Asn) + L-glutamate + ADP + phosphate + 2 H(+). In terms of biological role, allows the formation of correctly charged Asn-tRNA(Asn) or Gln-tRNA(Gln) through the transamidation of misacylated Asp-tRNA(Asn) or Glu-tRNA(Gln) in organisms which lack either or both of asparaginyl-tRNA or glutaminyl-tRNA synthetases. The reaction takes place in the presence of glutamine and ATP through an activated phospho-Asp-tRNA(Asn) or phospho-Glu-tRNA(Gln). This chain is Aspartyl/glutamyl-tRNA(Asn/Gln) amidotransferase subunit C, found in Rickettsia bellii (strain OSU 85-389).